Reading from the N-terminus, the 67-residue chain is Large ribosomal subunit protein bL31 (67 aa).

Cysteine 16, cysteine 18, cysteine 38, and cysteine 41 together coordinate Zn(2+).

It belongs to the bacterial ribosomal protein bL31 family. Type A subfamily. In terms of assembly, part of the 50S ribosomal subunit. The cofactor is Zn(2+).

Functionally, binds the 23S rRNA. This is Large ribosomal subunit protein bL31 from Thioalkalivibrio sulfidiphilus (strain HL-EbGR7).